The sequence spans 488 residues: Ribulose bisphosphate carboxylase large chain 1 (488 aa).

Substrate is bound by residues Asn-128 and Thr-178. The Proton acceptor role is filled by Lys-180. Lys-182 is a substrate binding site. Lys-206, Asp-208, and Glu-209 together coordinate Mg(2+). The residue at position 206 (Lys-206) is an N6-carboxylysine. His-298 serves as the catalytic Proton acceptor. 3 residues coordinate substrate: Arg-299, His-331, and Ser-383.

This sequence belongs to the RuBisCO large chain family. Type I subfamily. In terms of assembly, heterohexadecamer of 8 large chains and 8 small chains. Mg(2+) serves as cofactor.

The enzyme catalyses 2 (2R)-3-phosphoglycerate + 2 H(+) = D-ribulose 1,5-bisphosphate + CO2 + H2O. It catalyses the reaction D-ribulose 1,5-bisphosphate + O2 = 2-phosphoglycolate + (2R)-3-phosphoglycerate + 2 H(+). Its function is as follows. RuBisCO catalyzes two reactions: the carboxylation of D-ribulose 1,5-bisphosphate, the primary event in carbon dioxide fixation, as well as the oxidative fragmentation of the pentose substrate. Both reactions occur simultaneously and in competition at the same active site. This Methylibium petroleiphilum (strain ATCC BAA-1232 / LMG 22953 / PM1) protein is Ribulose bisphosphate carboxylase large chain 1.